The following is a 736-amino-acid chain: DNA topoisomerase 1 (736 aa).

The region spanning 2–113 is the Toprim domain; sequence KHLIIVESPA…SYPRIVFHEI (112 aa). Mg(2+) contacts are provided by Glu8 and Asp82. The Topo IA-type catalytic domain occupies 129-552; it reads DMFKVNAQQA…DFYYPFMDKI (424 aa). The interaction with DNA stretch occupies residues 163 to 168; the sequence is SAGRVQ. The active-site O-(5'-phospho-DNA)-tyrosine intermediate is Tyr297. C4-type zinc fingers lie at residues 572–598, 616–642, 663–689, and 702–725; these read CPKC…YPKC, CEKC…YPEC, CPEC…YPKC, and CEKC…CIQC.

It belongs to the type IA topoisomerase family. Monomer. It depends on Mg(2+) as a cofactor.

The catalysed reaction is ATP-independent breakage of single-stranded DNA, followed by passage and rejoining.. In terms of biological role, releases the supercoiling and torsional tension of DNA, which is introduced during the DNA replication and transcription, by transiently cleaving and rejoining one strand of the DNA duplex. Introduces a single-strand break via transesterification at a target site in duplex DNA. The scissile phosphodiester is attacked by the catalytic tyrosine of the enzyme, resulting in the formation of a DNA-(5'-phosphotyrosyl)-enzyme intermediate and the expulsion of a 3'-OH DNA strand. The free DNA strand then undergoes passage around the unbroken strand, thus removing DNA supercoils. Finally, in the religation step, the DNA 3'-OH attacks the covalent intermediate to expel the active-site tyrosine and restore the DNA phosphodiester backbone. This Helicobacter pylori (strain J99 / ATCC 700824) (Campylobacter pylori J99) protein is DNA topoisomerase 1.